Consider the following 311-residue polypeptide: Lipoyl synthase (311 aa).

Residues Cys-47, Cys-52, Cys-58, Cys-73, Cys-77, Cys-80, and Ser-287 each coordinate [4Fe-4S] cluster. Residues 59-276 (WTKKHATVMI…AQIARAKGFL (218 aa)) enclose the Radical SAM core domain.

This sequence belongs to the radical SAM superfamily. Lipoyl synthase family. [4Fe-4S] cluster is required as a cofactor.

The protein localises to the cytoplasm. It carries out the reaction [[Fe-S] cluster scaffold protein carrying a second [4Fe-4S](2+) cluster] + N(6)-octanoyl-L-lysyl-[protein] + 2 oxidized [2Fe-2S]-[ferredoxin] + 2 S-adenosyl-L-methionine + 4 H(+) = [[Fe-S] cluster scaffold protein] + N(6)-[(R)-dihydrolipoyl]-L-lysyl-[protein] + 4 Fe(3+) + 2 hydrogen sulfide + 2 5'-deoxyadenosine + 2 L-methionine + 2 reduced [2Fe-2S]-[ferredoxin]. It participates in protein modification; protein lipoylation via endogenous pathway; protein N(6)-(lipoyl)lysine from octanoyl-[acyl-carrier-protein]: step 2/2. Catalyzes the radical-mediated insertion of two sulfur atoms into the C-6 and C-8 positions of the octanoyl moiety bound to the lipoyl domains of lipoate-dependent enzymes, thereby converting the octanoylated domains into lipoylated derivatives. The polypeptide is Lipoyl synthase (Sphingopyxis alaskensis (strain DSM 13593 / LMG 18877 / RB2256) (Sphingomonas alaskensis)).